Reading from the N-terminus, the 694-residue chain is Ferric reductase transmembrane component 5 (694 aa).

A signal peptide spans 1-19 (MLFARLVLLLVYLAPGSLA). The Extracellular segment spans residues 20–163 (KPASTKKRTQ…LDNIDKGNVY (144 aa)). N117 carries N-linked (GlcNAc...) asparagine glycosylation. Residues 164-184 (GVTICLYWIGVLFIAAVYHFL) form a helical membrane-spanning segment. Residues 185–222 (NFSRLKQTVFKNKVSAFLRGHYVLPALVHNHAMSVGRW) are Cytoplasmic-facing. A helical transmembrane segment spans residues 223–243 (FFIGLVPTRLETLVLFGYVLL). The Extracellular segment spans residues 244-267 (HGFLLSSYNFDHNELLSDRRSQVL). Residues 268 to 288 (IFLSDRAGILAFAHFPLIVLF) form a helical membrane-spanning segment. The 135-residue stretch at 274 to 408 (AGILAFAHFP…GWGEWIMACA (135 aa)) folds into the Ferric oxidoreductase domain. Residues 289-311 (GGKNSTMTWLTGIRYTAFITYHK) are Cytoplasmic-facing. H310 and H324 together coordinate heme. The helical transmembrane segment at 312–334 (WLGRFMLVDCTIHAIGYTYHAYI) threads the bilayer. The Extracellular segment spans residues 335-347 (ENYWKYVKYSDLW). Residues 348 to 368 (TSGRHAMIIVGILVFFSFFFF) form a helical membrane-spanning segment. Over 369–371 (RRH) the chain is Cytoplasmic. A helical membrane pass occupies residues 372-392 (YYELFVITHIILAIGFFHACW). Heme-binding residues include H380 and H394. The Extracellular portion of the chain corresponds to 393-403 (KHCYKLGWGEW). A helical membrane pass occupies residues 404 to 424 (IMACALFWIADRILRLIKIAI). One can recognise an FAD-binding FR-type domain in the interval 409 to 528 (LFWIADRILR…EGPYGQSTRT (120 aa)). The Cytoplasmic portion of the chain corresponds to 425-694 (FGMPWAKLKL…IEYVEEFQNW (270 aa)). 473-479 (HPFTVMD) is a binding site for FAD. Residues 520 to 523 (GPYG) and 660 to 661 (CG) each bind NADP(+).

This sequence belongs to the ferric reductase (FRE) family. Requires FAD as cofactor.

It localises to the cell membrane. It carries out the reaction 2 a Fe(II)-siderophore + NADP(+) + H(+) = 2 a Fe(III)-siderophore + NADPH. Functionally, metalloreductase responsible for reducing extracellular iron and copper prior to import. Catalyzes the reductive uptake of Fe(3+)-salts and Fe(3+) bound to catecholate or hydroxamate siderophores. Fe(3+) is reduced to Fe(2+), which then dissociates from the siderophore and can be imported by the high-affinity Fe(2+) transport complex in the plasma membrane. The chain is Ferric reductase transmembrane component 5 (FRE5) from Saccharomyces cerevisiae (strain ATCC 204508 / S288c) (Baker's yeast).